A 658-amino-acid polypeptide reads, in one-letter code: Threonine--tRNA ligase (658 aa).

The TGS domain maps to 1-61; the sequence is MSDVRVIIQR…KDGETVEAVE (61 aa). A catalytic region spans residues 259-554; that stretch reads DHRKLGSELD…LLEHYAGAMP (296 aa). Zn(2+) contacts are provided by C353, H404, and H531.

This sequence belongs to the class-II aminoacyl-tRNA synthetase family. Homodimer. It depends on Zn(2+) as a cofactor.

Its subcellular location is the cytoplasm. It carries out the reaction tRNA(Thr) + L-threonine + ATP = L-threonyl-tRNA(Thr) + AMP + diphosphate + H(+). Functionally, catalyzes the attachment of threonine to tRNA(Thr) in a two-step reaction: L-threonine is first activated by ATP to form Thr-AMP and then transferred to the acceptor end of tRNA(Thr). Also edits incorrectly charged L-seryl-tRNA(Thr). The sequence is that of Threonine--tRNA ligase from Streptomyces coelicolor (strain ATCC BAA-471 / A3(2) / M145).